Consider the following 989-residue polypeptide: Mediator of RNA polymerase II transcription subunit 24 (989 aa).

6 short sequence motifs (LXXLL motif) span residues 343–347, 359–363, 447–451, 556–560, 787–791, and 857–861; these read LTPLL, LSLLL, LDLLL, LVALL, LPRLL, and LMRLL.

Belongs to the Mediator complex subunit 24 family. As to quaternary structure, component of the Mediator complex.

It localises to the nucleus. In terms of biological role, component of the Mediator complex, a coactivator involved in the regulated transcription of nearly all RNA polymerase II-dependent genes. Mediator functions as a bridge to convey information from gene-specific regulatory proteins to the basal RNA polymerase II transcription machinery. Mediator is recruited to promoters by direct interactions with regulatory proteins and serves as a scaffold for the assembly of a functional preinitiation complex with RNA polymerase II and the general transcription factors. Required for proliferation of enteric nervous system precursors. Required for the development of dopaminergic amacrine cells and rod photoreceptor cells in the retina. The protein is Mediator of RNA polymerase II transcription subunit 24 (med24) of Danio rerio (Zebrafish).